A 453-amino-acid polypeptide reads, in one-letter code: Chromosomal replication initiator protein DnaA (453 aa).

The interval 1 to 73 is domain I, interacts with DnaA modulators; sequence MNISPQYLWN…AQEVASVVGY (73 aa). Residues 73 to 112 are domain II; it reads YPVDIQLTTAEGETMAMTGEAQSYQEKSLTQIAPESPKLN. The interval 113 to 329 is domain III, AAA+ region; that stretch reads QLNPRYTFSR…GALIRAIAYT (217 aa). ATP contacts are provided by Gly-157, Gly-159, Lys-160, and Thr-161. The interval 330–453 is domain IV, binds dsDNA; the sequence is SISGLSMTVQ…RINMASRTQS (124 aa).

This sequence belongs to the DnaA family. Oligomerizes as a right-handed, spiral filament on DNA at oriC.

It localises to the cytoplasm. Plays an essential role in the initiation and regulation of chromosomal replication. ATP-DnaA binds to the origin of replication (oriC) to initiate formation of the DNA replication initiation complex once per cell cycle. Binds the DnaA box (a 9 base pair repeat at the origin) and separates the double-stranded (ds)DNA. Forms a right-handed helical filament on oriC DNA; dsDNA binds to the exterior of the filament while single-stranded (ss)DNA is stabiized in the filament's interior. The ATP-DnaA-oriC complex binds and stabilizes one strand of the AT-rich DNA unwinding element (DUE), permitting loading of DNA polymerase. After initiation quickly degrades to an ADP-DnaA complex that is not apt for DNA replication. Binds acidic phospholipids. The chain is Chromosomal replication initiator protein DnaA from Rippkaea orientalis (strain PCC 8801 / RF-1) (Cyanothece sp. (strain PCC 8801)).